Reading from the N-terminus, the 37-residue chain is Omega-sparatoxin-Hv1a (37 aa).

3 cysteine pairs are disulfide-bonded: Cys-4-Cys-18, Cys-11-Cys-23, and Cys-17-Cys-33.

In terms of tissue distribution, expressed by the venom gland.

It is found in the secreted. Its function is as follows. Blocks calcium channels (Cav). The sequence is that of Omega-sparatoxin-Hv1a from Heteropoda venatoria (Brown huntsman spider).